A 485-amino-acid polypeptide reads, in one-letter code: FAD-dependent monooxygenase elcH (485 aa).

The first 19 residues, 1-19, serve as a signal peptide directing secretion; sequence MFTLRSLAILAVFAATALA. FAD is bound by residues Asp59 and Gly73. 3 N-linked (GlcNAc...) asparagine glycosylation sites follow: Asn126, Asn147, and Asn157.

This sequence belongs to the paxM FAD-dependent monooxygenase family. FAD is required as a cofactor.

It participates in secondary metabolite biosynthesis. FAD-dependent monooxygenase; part of the gene cluster that mediates the biosynthesis of elsinochrome C, a perelyenequinone phytotoxin structurally similar to cercosporin. The first step of elsinochrome C biosynthesis is performed by the polyketide synthase elcA which catalyzes the formation of nor-toralactone. The starter unit acyltransferase (SAT) domain of elcA initiates polyketide extension by the selective utilization of acetyl-CoA, which is elongated to the heptaketide in the beta-ketoacyl synthase (KS) domain by successive condensations with six malonyl units introduced by the malonyl acyltransferase (MAT) domain. The product template (PT) domain catalyzes C4-C9 and C2-C11 aldol cyclizations and dehydrations to a trihydroxynaphthalene, which is thought to be delivered to the thioesterase (TE) domain for product release. The bifunctional enzyme elcB then methylates nor-toralactone to toralactone before conducting an unusual oxidative aromatic ring opening. The next step in perylenequinone biosynthesis is an O-methylation at the nascent OH-6 of the elcB product performed by the O-methyltransferase elcD. The oxidative coupling of the two monomeric naphthol units in perylenequinone biosynthesis is catalyzed by the FAD-dependent monooxygenase elcE and the multicopper oxidase elcG. ElcG might catalyze the first intermolecular coupling in a regio- and stereo-selective manner via a phenol radical coupling mechanism and the elcE could forge the second C-C bond intramolecularly via a hydride transfer mechanism. The fasciclin domain-containing protein elcF might also play a role duting this step. The last piece of the puzzle in the biosynthesis of elsinochrome C is the additional annulation by enolate coupling to afford the dihydrobenzo(ghi)perylenequinone system, catalyzed by the FAD-dependent monooxygenase elcH. In Phaeosphaeria nodorum (strain SN15 / ATCC MYA-4574 / FGSC 10173) (Glume blotch fungus), this protein is FAD-dependent monooxygenase elcH.